The sequence spans 557 residues: TGF-beta receptor type-2 (557 aa).

A signal peptide spans 1 to 23; sequence MPPRLRPLLLRVSLWVLVGSSSP. Topologically, residues 24–155 are extracellular; that stretch reads ALLHDRSKEN…KPEEKDEISK (132 aa). 6 cysteine pairs are disulfide-bonded: cysteine 41–cysteine 74, cysteine 44–cysteine 61, cysteine 51–cysteine 57, cysteine 67–cysteine 91, cysteine 111–cysteine 126, and cysteine 128–cysteine 133. N-linked (GlcNAc...) asparagine glycans are attached at residues asparagine 62 and asparagine 84. A helical transmembrane segment spans residues 156–176; sequence VTIISLVPLLVISVAVIVIFY. Residues 177-557 lie on the Cytoplasmic side of the membrane; the sequence is AYRTHKKRKL…PEDGSVTTAK (381 aa). In terms of domain architecture, Protein kinase spans 234–537; that stretch reads IELDIVVGKG…FSEFKHHDKL (304 aa). Residues 240–248 and lysine 267 contribute to the ATP site; that span reads VGKGRFAEV. The Proton acceptor role is filled by aspartate 369.

This sequence belongs to the protein kinase superfamily. TKL Ser/Thr protein kinase family. TGFB receptor subfamily. Heterohexamer; TGFB1, TGFB2 and TGFB3 homodimeric ligands assemble a functional receptor composed of two TGFBR1 and TGFBR2 heterodimers to form a ligand-receptor heterohexamer. Mg(2+) is required as a cofactor. The cofactor is Mn(2+). Phosphorylated on a Ser/Thr residue in the cytoplasmic domain. Detected at low levels in embryonic heart, brain and lung. Detected at high levels in hatchling heart and lung.

It localises to the cell membrane. It is found in the membrane raft. It carries out the reaction L-threonyl-[receptor-protein] + ATP = O-phospho-L-threonyl-[receptor-protein] + ADP + H(+). It catalyses the reaction L-seryl-[receptor-protein] + ATP = O-phospho-L-seryl-[receptor-protein] + ADP + H(+). Functionally, transmembrane serine/threonine kinase forming with the TGF-beta type I serine/threonine kinase receptor, TGFBR1, the non-promiscuous receptor for the TGF-beta cytokines TGFB1, TGFB2 and TGFB3. Transduces the TGFB1, TGFB2 and TGFB3 signal from the cell surface to the cytoplasm and is thus regulating a plethora of physiological and pathological processes including cell cycle arrest in epithelial and hematopoietic cells, control of mesenchymal cell proliferation and differentiation, wound healing, extracellular matrix production, immunosuppression and carcinogenesis. The formation of the receptor complex composed of 2 TGFBR1 and 2 TGFBR2 molecules symmetrically bound to the cytokine dimer results in the phosphorylation and the activation of TGFRB1 by the constitutively active TGFBR2. Activated TGFBR1 phosphorylates SMAD2 which dissociates from the receptor and interacts with SMAD4. The SMAD2-SMAD4 complex is subsequently translocated to the nucleus where it modulates the transcription of the TGF-beta-regulated genes. This constitutes the canonical SMAD-dependent TGF-beta signaling cascade. Also involved in non-canonical, SMAD-independent TGF-beta signaling pathways. The protein is TGF-beta receptor type-2 (TGFBR2) of Gallus gallus (Chicken).